Here is a 330-residue protein sequence, read N- to C-terminus: MKKSFILQQQEISFVKNTFTQYLIDQLDIIEVQGPILSQVGNGMQDNLSGIEKAVQVNVKCIPGAVFEVVHSLAKWKRHTLARFGFKQGEGLFVHMKALRPDEDSLDPTHSIYVDQWDWEKVIPEGQRNFAYLKQTVNQIYKAIRLTELAVEARFDIPSSLPKQITFIHSEELAQRYPNMSSKERENAICKEHGAIFLIGIGGKLSDGKAHDGRAPDYDDWTTESENGYKGLNGDILVWNEELGSAFELSSMGIRVDQQALRLQVSLTGDEDRLTMDWHQDLLAGRLPLSIGGGIGQSRLVMFLLHKKHIGEVQSSVWPTEMLTQFENIL.

Belongs to the class-II aminoacyl-tRNA synthetase family. AsnA subfamily.

The protein localises to the cytoplasm. It carries out the reaction L-aspartate + NH4(+) + ATP = L-asparagine + AMP + diphosphate + H(+). It participates in amino-acid biosynthesis; L-asparagine biosynthesis; L-asparagine from L-aspartate (ammonia route): step 1/1. The sequence is that of Aspartate--ammonia ligase from Haemophilus ducreyi (strain 35000HP / ATCC 700724).